Reading from the N-terminus, the 292-residue chain is Sulfofructosephosphate aldolase (292 aa).

The active-site Schiff-base intermediate with substrate is lysine 193.

This sequence belongs to the aldolase LacD family. As to quaternary structure, homotetramer.

It carries out the reaction 6-deoxy-6-sulfo-D-fructose 1-phosphate = (2S)-3-sulfolactaldehyde + dihydroxyacetone phosphate. Cleaves 6-deoxy-6-sulfo-D-fructose 1-phosphate (SFP) to form dihydroxyacetone phosphate (DHAP) and 3-sulfolactaldehyde (SLA). This Escherichia coli O157:H7 protein is Sulfofructosephosphate aldolase (yihT).